We begin with the raw amino-acid sequence, 669 residues long: Filensin (669 aa).

A head region spans residues 1–33 (MYRRSYVFQARQERYERAQPAGPAAQPGGTAPG). Serine 5 bears the Phosphoserine mark. The IF rod domain maps to 33 to 318 (GLAALQALGE…RIIEIEGSRL (286 aa)). The segment at 34–68 (LAALQALGERVAVQVQRARALQQRHAGLRRQLDAF) is coil 1A. Alanine 35 carries the N-acetylalanine modification. Residues 69–77 (QRLGEQPGP) form a linker 1 region. The tract at residues 78–177 (EDALARHVEA…RYKKNLLEIQ (100 aa)) is coil 1B. The segment at 178–194 (TYITVLQQIVQTAPQVS) is linker 12. Residues 195 to 318 (LVTGMRESGL…RIIEIEGSRL (124 aa)) form a coil 2 region. The interval 319–669 (SSVFIETPIS…GEKSLPDTRA (351 aa)) is tail. At serine 339 the chain carries Phosphoserine. Disordered regions lie at residues 380 to 435 (VEET…GGQI), 449 to 468 (RVSG…FTKG), and 505 to 618 (HHDG…KALS). The segment covering 408–417 (SQPGAGGGHG) has biased composition (gly residues). Glycine 432 carries the N-myristoyl glycine lipid modification. Serine 513 carries the post-translational modification Phosphoserine. The segment covering 545–570 (NGLRAKEPKDLEEKDDDGKKEAEGSR) has biased composition (basic and acidic residues). Residues 583–593 (PSTSHSQTSGS) show a composition bias toward polar residues. Position 585 is a phosphothreonine (threonine 585).

This sequence belongs to the intermediate filament family. In terms of assembly, part of a complex required for lens intermediate filament formation composed of BFSP1, BFSP2 and CRYAA. Identified in a complex that contains VIM, EZR, AHNAK, BFSP1, BFSP2, ANK2, PLEC, PRX and spectrin. Found in a complex composed of PPL (via C-terminal linker domain), BFSP1 and BFSP2 in the retinal lens. Within the complex interacts with BFSP2. Interacts (via C-terminus) with MIP (via C-terminus) in aged lens fiber cells. Proteolytically cleaved during lens cell fiber differentiation with increased fragmentation as fiber cell age increases. In terms of processing, myristoylated at Gly-432 following proteolytic cleavage at Asp-431. Post-translationally, acetylated at Ala-35 following proteolytic cleavage at Leu-34. Detected in eye lens fiber cells (at protein level). Expressed in retinal lens epithelial cells (at protein level).

It is found in the cell membrane. Its subcellular location is the cytoplasm. The protein resides in the cytoskeleton. It localises to the cell cortex. Its function is as follows. Required for the correct formation of lens intermediate filaments as part of a complex composed of BFSP1, BFSP2 and CRYAA. Involved in altering the calcium regulation of MIP water permeability. The sequence is that of Filensin (Bfsp1) from Mus musculus (Mouse).